A 465-amino-acid polypeptide reads, in one-letter code: UDP-N-acetylmuramate--L-alanine ligase (465 aa).

ATP is bound at residue 112–118 (GTHGKTT).

This sequence belongs to the MurCDEF family.

Its subcellular location is the cytoplasm. It carries out the reaction UDP-N-acetyl-alpha-D-muramate + L-alanine + ATP = UDP-N-acetyl-alpha-D-muramoyl-L-alanine + ADP + phosphate + H(+). Its pathway is cell wall biogenesis; peptidoglycan biosynthesis. In terms of biological role, cell wall formation. This is UDP-N-acetylmuramate--L-alanine ligase from Burkholderia cenocepacia (strain ATCC BAA-245 / DSM 16553 / LMG 16656 / NCTC 13227 / J2315 / CF5610) (Burkholderia cepacia (strain J2315)).